The following is a 553-amino-acid chain: Dihydroxy-acid dehydratase (553 aa).

Aspartate 78 lines the Mg(2+) pocket. A [2Fe-2S] cluster-binding site is contributed by cysteine 119. Aspartate 120 and lysine 121 together coordinate Mg(2+). At lysine 121 the chain carries N6-carboxylysine. Cysteine 193 contacts [2Fe-2S] cluster. Glutamate 441 contributes to the Mg(2+) binding site. The active-site Proton acceptor is the serine 467.

It belongs to the IlvD/Edd family. Homodimer. It depends on [2Fe-2S] cluster as a cofactor. Requires Mg(2+) as cofactor.

It carries out the reaction (2R)-2,3-dihydroxy-3-methylbutanoate = 3-methyl-2-oxobutanoate + H2O. The catalysed reaction is (2R,3R)-2,3-dihydroxy-3-methylpentanoate = (S)-3-methyl-2-oxopentanoate + H2O. It functions in the pathway amino-acid biosynthesis; L-isoleucine biosynthesis; L-isoleucine from 2-oxobutanoate: step 3/4. The protein operates within amino-acid biosynthesis; L-valine biosynthesis; L-valine from pyruvate: step 3/4. Functionally, functions in the biosynthesis of branched-chain amino acids. Catalyzes the dehydration of (2R,3R)-2,3-dihydroxy-3-methylpentanoate (2,3-dihydroxy-3-methylvalerate) into 2-oxo-3-methylpentanoate (2-oxo-3-methylvalerate) and of (2R)-2,3-dihydroxy-3-methylbutanoate (2,3-dihydroxyisovalerate) into 2-oxo-3-methylbutanoate (2-oxoisovalerate), the penultimate precursor to L-isoleucine and L-valine, respectively. The protein is Dihydroxy-acid dehydratase of Geobacter sp. (strain M21).